The following is a 121-amino-acid chain: Large ribosomal subunit protein bL12 (121 aa).

It belongs to the bacterial ribosomal protein bL12 family. In terms of assembly, homodimer. Part of the ribosomal stalk of the 50S ribosomal subunit. Forms a multimeric L10(L12)X complex, where L10 forms an elongated spine to which 2 to 4 L12 dimers bind in a sequential fashion. Binds GTP-bound translation factors.

Functionally, forms part of the ribosomal stalk which helps the ribosome interact with GTP-bound translation factors. Is thus essential for accurate translation. The polypeptide is Large ribosomal subunit protein bL12 (Clostridium beijerinckii (strain ATCC 51743 / NCIMB 8052) (Clostridium acetobutylicum)).